Consider the following 106-residue polypeptide: CDGSH iron-sulfur domain-containing protein 1 (106 aa).

An N-acetylserine modification is found at S2. Residues 10-29 (EWIAAVTIAAGTAAIGYLAY) form a helical; Signal-anchor for type III membrane protein membrane-spanning segment. At 30 to 106 (KRFYVKDHRN…GPLIIKKKDT (77 aa)) the chain is on the cytoplasmic side. Residue K40 forms a Glycyl lysine isopeptide (Lys-Gly) (interchain with G-Cter in ubiquitin) linkage. The active-site Schiff-base intermediate with pyridoxal 5'-phosphate is the K53. Residues K53 and K66 each carry the N6-acetyllysine; alternate modification. Glycyl lysine isopeptide (Lys-Gly) (interchain with G-Cter in ubiquitin); alternate cross-links involve residues K53 and K66. C70 and C72 together coordinate [2Fe-2S] cluster. Residues K76 and K77 each participate in a glycyl lysine isopeptide (Lys-Gly) (interchain with G-Cter in ubiquitin) cross-link. [2Fe-2S] cluster-binding residues include C81 and H85. The tract at residues 84 to 106 (SHTKHNEETGDNVGPLIIKKKDT) is disordered. Residue K87 forms a Glycyl lysine isopeptide (Lys-Gly) (interchain with G-Cter in ubiquitin) linkage. K102 is subject to N6-acetyllysine; alternate. K102 is covalently cross-linked (Glycyl lysine isopeptide (Lys-Gly) (interchain with G-Cter in ubiquitin); alternate). Residues K103 and K104 each participate in a glycyl lysine isopeptide (Lys-Gly) (interchain with G-Cter in ubiquitin) cross-link.

Belongs to the CISD protein family. In terms of assembly, homodimer. It depends on [2Fe-2S] cluster as a cofactor. Pyridoxal 5'-phosphate is required as a cofactor. Ubiquitinated by PRKN during mitophagy, leading to its degradation and enhancement of mitophagy. Deubiquitinated by USP30.

It localises to the mitochondrion outer membrane. It catalyses the reaction L-cysteine + 2-oxoglutarate = 2-oxo-3-sulfanylpropanoate + L-glutamate. L-cysteine transaminase that catalyzes the reversible transfer of the amino group from L-cysteine to the alpha-keto acid 2-oxoglutarate to respectively form 2-oxo-3-sulfanylpropanoate and L-glutamate. The catalytic cycle occurs in the presence of pyridoxal 5'-phosphate (PLP) cofactor that facilitates transamination by initially forming an internal aldimine with the epsilon-amino group of active site Lys-55 residue on the enzyme (PLP-enzyme aldimine), subsequently displaced by formation of an external aldimine with the substrate amino group (PLP-L-cysteine aldimine). The external aldimine is further deprotonated to form a carbanion intermediate, which in the presence of 2-oxoglutarate regenerates PLP yielding final products 2-oxo-3-sulfanylpropanoate and L-glutamate. The proton transfer in carbanion intermediate is suggested to be controlled by the active site lysine residue, whereas PLP stabilizes carbanion structure through electron delocalization, also known as the electron sink effect. Plays a key role in regulating maximal capacity for electron transport and oxidative phosphorylation. May be involved in iron-sulfur cluster shuttling and/or in redox reactions. Can transfer the [2Fe-2S] cluster to an apo-acceptor protein only when in the oxidation state, likely serving as a redox sensor that regulates mitochondrial iron-sulfur cluster assembly and iron trafficking upon oxidative stress. In Bos taurus (Bovine), this protein is CDGSH iron-sulfur domain-containing protein 1 (CISD1).